Here is a 147-residue protein sequence, read N- to C-terminus: Lysozyme C, tracheal isozyme (147 aa).

The N-terminal stretch at 1–18 is a signal peptide; that stretch reads MKALLILGLLLLSVAVQG. The region spanning 19 to 147 is the C-type lysozyme domain; it reads KTFKRCELAK…LTSYVKGCGV (129 aa). 4 cysteine pairs are disulfide-bonded: Cys-24/Cys-145, Cys-48/Cys-133, Cys-83/Cys-99, and Cys-95/Cys-113. Active-site residues include Glu-53 and Asp-71.

Belongs to the glycosyl hydrolase 22 family. In terms of assembly, monomer. As to expression, trachea.

The catalysed reaction is Hydrolysis of (1-&gt;4)-beta-linkages between N-acetylmuramic acid and N-acetyl-D-glucosamine residues in a peptidoglycan and between N-acetyl-D-glucosamine residues in chitodextrins.. In terms of biological role, lysozymes have primarily a bacteriolytic function; those in tissues and body fluids are associated with the monocyte-macrophage system and enhance the activity of immunoagents. This is Lysozyme C, tracheal isozyme from Bos taurus (Bovine).